Here is a 202-residue protein sequence, read N- to C-terminus: Phosphoenolpyruvate guanylyltransferase (202 aa).

3 residues coordinate phosphoenolpyruvate: Thr140, Gly156, and Ser159.

It belongs to the CofC family.

The catalysed reaction is phosphoenolpyruvate + GTP + H(+) = enolpyruvoyl-2-diphospho-5'-guanosine + diphosphate. Its pathway is cofactor biosynthesis; coenzyme F420 biosynthesis. Functionally, guanylyltransferase that catalyzes the activation of phosphoenolpyruvate (PEP) as enolpyruvoyl-2-diphospho-5'-guanosine, via the condensation of PEP with GTP. It is involved in the biosynthesis of coenzyme F420, a hydride carrier cofactor. The polypeptide is Phosphoenolpyruvate guanylyltransferase (Chloroflexus aggregans (strain MD-66 / DSM 9485)).